The following is a 93-amino-acid chain: Em protein H2 (93 aa).

A disordered region spans residues 1-93 (MASGQQERSQ…IDESKFKTKS (93 aa)). Composition is skewed to basic and acidic residues over residues 9–19 (SQLDRKAREGE), 31–52 (LEAHENLAEGRSRGGQTRREQM), and 73–93 (GGERAAREGIDIDESKFKTKS).

The protein belongs to the small hydrophilic plant seed protein family.

Its function is as follows. It is thought to provide protection for the cytoplasm during the desiccation stage of embryo development. This chain is Em protein H2 (EMH2), found in Triticum aestivum (Wheat).